A 214-amino-acid chain; its full sequence is UPF0502 protein Spro_2794 (214 aa).

The protein belongs to the UPF0502 family.

This Serratia proteamaculans (strain 568) protein is UPF0502 protein Spro_2794.